The following is a 402-amino-acid chain: Elongation factor Tu (402 aa).

The tr-type G domain maps to 16-211 (KEHINIGTIG…AVDSYIDSPV (196 aa)). Residues 25–32 (GHVDHGKT) form a G1 region. 25–32 (GHVDHGKT) provides a ligand contact to GTP. Thr-32 provides a ligand contact to Mg(2+). The G2 stretch occupies residues 66–70 (GITIN). The interval 87 to 90 (DCPG) is G3. GTP is bound by residues 87 to 91 (DCPGH) and 142 to 145 (NKID). The tract at residues 142–145 (NKID) is G4. Residues 181–183 (SAR) are G5.

This sequence belongs to the TRAFAC class translation factor GTPase superfamily. Classic translation factor GTPase family. EF-Tu/EF-1A subfamily. Monomer.

It is found in the cytoplasm. It catalyses the reaction GTP + H2O = GDP + phosphate + H(+). GTP hydrolase that promotes the GTP-dependent binding of aminoacyl-tRNA to the A-site of ribosomes during protein biosynthesis. In Mesomycoplasma hyopneumoniae (strain 232) (Mycoplasma hyopneumoniae), this protein is Elongation factor Tu.